A 451-amino-acid chain; its full sequence is UDP-N-acetylmuramate--L-alanine ligase (451 aa).

ATP is bound at residue 110–116 (GTHGKTT).

It belongs to the MurCDEF family.

The protein resides in the cytoplasm. It carries out the reaction UDP-N-acetyl-alpha-D-muramate + L-alanine + ATP = UDP-N-acetyl-alpha-D-muramoyl-L-alanine + ADP + phosphate + H(+). Its pathway is cell wall biogenesis; peptidoglycan biosynthesis. Its function is as follows. Cell wall formation. This chain is UDP-N-acetylmuramate--L-alanine ligase, found in Francisella tularensis subsp. tularensis (strain WY96-3418).